The following is a 347-amino-acid chain: tRNA pseudouridine synthase D (347 aa).

Aspartate 78 (nucleophile) is an active-site residue. Residues 150–304 (GLPNFFGPQR…AEGTRRAARL (155 aa)) enclose the TRUD domain.

This sequence belongs to the pseudouridine synthase TruD family.

It carries out the reaction uridine(13) in tRNA = pseudouridine(13) in tRNA. In terms of biological role, responsible for synthesis of pseudouridine from uracil-13 in transfer RNAs. In Anaeromyxobacter dehalogenans (strain 2CP-C), this protein is tRNA pseudouridine synthase D.